A 227-amino-acid chain; its full sequence is Phosphoribosylformylglycinamidine synthase subunit PurQ (227 aa).

One can recognise a Glutamine amidotransferase type-1 domain in the interval 3–225 (FAVIVFPGSN…VKQGAHHVKT (223 aa)). Cys-86 functions as the Nucleophile in the catalytic mechanism. Catalysis depends on residues His-194 and Glu-196.

As to quaternary structure, part of the FGAM synthase complex composed of 1 PurL, 1 PurQ and 2 PurS subunits.

It is found in the cytoplasm. The catalysed reaction is N(2)-formyl-N(1)-(5-phospho-beta-D-ribosyl)glycinamide + L-glutamine + ATP + H2O = 2-formamido-N(1)-(5-O-phospho-beta-D-ribosyl)acetamidine + L-glutamate + ADP + phosphate + H(+). The enzyme catalyses L-glutamine + H2O = L-glutamate + NH4(+). Its pathway is purine metabolism; IMP biosynthesis via de novo pathway; 5-amino-1-(5-phospho-D-ribosyl)imidazole from N(2)-formyl-N(1)-(5-phospho-D-ribosyl)glycinamide: step 1/2. Part of the phosphoribosylformylglycinamidine synthase complex involved in the purines biosynthetic pathway. Catalyzes the ATP-dependent conversion of formylglycinamide ribonucleotide (FGAR) and glutamine to yield formylglycinamidine ribonucleotide (FGAM) and glutamate. The FGAM synthase complex is composed of three subunits. PurQ produces an ammonia molecule by converting glutamine to glutamate. PurL transfers the ammonia molecule to FGAR to form FGAM in an ATP-dependent manner. PurS interacts with PurQ and PurL and is thought to assist in the transfer of the ammonia molecule from PurQ to PurL. This Exiguobacterium sibiricum (strain DSM 17290 / CCUG 55495 / CIP 109462 / JCM 13490 / 255-15) protein is Phosphoribosylformylglycinamidine synthase subunit PurQ.